Here is a 418-residue protein sequence, read N- to C-terminus: Serine hydroxymethyltransferase (418 aa).

Residues Leu121 and 125-127 (GHL) each bind (6S)-5,6,7,8-tetrahydrofolate. Position 230 is an N6-(pyridoxal phosphate)lysine (Lys230). Residues Glu246 and 355–357 (SPF) contribute to the (6S)-5,6,7,8-tetrahydrofolate site.

Belongs to the SHMT family. Homodimer. Pyridoxal 5'-phosphate is required as a cofactor.

The protein localises to the cytoplasm. It catalyses the reaction (6R)-5,10-methylene-5,6,7,8-tetrahydrofolate + glycine + H2O = (6S)-5,6,7,8-tetrahydrofolate + L-serine. The protein operates within one-carbon metabolism; tetrahydrofolate interconversion. It participates in amino-acid biosynthesis; glycine biosynthesis; glycine from L-serine: step 1/1. Catalyzes the reversible interconversion of serine and glycine with tetrahydrofolate (THF) serving as the one-carbon carrier. This reaction serves as the major source of one-carbon groups required for the biosynthesis of purines, thymidylate, methionine, and other important biomolecules. Also exhibits THF-independent aldolase activity toward beta-hydroxyamino acids, producing glycine and aldehydes, via a retro-aldol mechanism. The protein is Serine hydroxymethyltransferase of Streptococcus pneumoniae (strain Taiwan19F-14).